The chain runs to 73 residues: Putative membrane protein insertion efficiency factor (73 aa).

Belongs to the UPF0161 family.

It is found in the cell inner membrane. Could be involved in insertion of integral membrane proteins into the membrane. The polypeptide is Putative membrane protein insertion efficiency factor (Dinoroseobacter shibae (strain DSM 16493 / NCIMB 14021 / DFL 12)).